The chain runs to 156 residues: dCTP deaminase (156 aa).

DCTP is bound by residues 79-84 (RSTFAR), aspartate 95, glutamine 124, and tyrosine 138.

It belongs to the dCTP deaminase family. Homotrimer.

The catalysed reaction is dCTP + H2O + H(+) = dUTP + NH4(+). It functions in the pathway pyrimidine metabolism; dUMP biosynthesis; dUMP from dCTP (dUTP route): step 1/2. In terms of biological role, catalyzes the deamination of dCTP to dUTP. The protein is dCTP deaminase of Thermococcus sibiricus (strain DSM 12597 / MM 739).